Reading from the N-terminus, the 403-residue chain is Argininosuccinate synthase (403 aa).

10–18 contacts ATP; sequence AYSGGLDTS. Tyr-87 is a binding site for L-citrulline. Residue Gly-117 coordinates ATP. Thr-119, Asn-123, and Asp-124 together coordinate L-aspartate. Asn-123 contacts L-citrulline. Arg-127, Ser-175, Glu-260, and Tyr-272 together coordinate L-citrulline.

Belongs to the argininosuccinate synthase family. Type 1 subfamily. As to quaternary structure, homotetramer.

The protein resides in the cytoplasm. The enzyme catalyses L-citrulline + L-aspartate + ATP = 2-(N(omega)-L-arginino)succinate + AMP + diphosphate + H(+). The protein operates within amino-acid biosynthesis; L-arginine biosynthesis; L-arginine from L-ornithine and carbamoyl phosphate: step 2/3. This chain is Argininosuccinate synthase, found in Bacillus subtilis (strain 168).